We begin with the raw amino-acid sequence, 306 residues long: Homeobox protein Hox-C13a (306 aa).

The tract at residues 68–90 (SVYSDISSPDTGRQCPAPQTSSS) is disordered. The homeobox DNA-binding region spans 236–295 (GRKKRVPYTKLQLKELEKEYAASKFITKDKRRRISAATNLSERQVTIWFQNRRVKEKKFI).

The protein belongs to the Abd-B homeobox family.

The protein resides in the nucleus. Sequence-specific transcription factor which is part of a developmental regulatory system that provides cells with specific positional identities on the anterior-posterior axis. This Takifugu rubripes (Japanese pufferfish) protein is Homeobox protein Hox-C13a (hoxc13a).